The sequence spans 433 residues: Succinate--CoA ligase [ADP-forming] subunit beta, mitochondrial (433 aa).

A mitochondrion-targeting transit peptide spans 1–23 (MLTRSVLRKAPRAFSPFLQKRNL). The 243-residue stretch at 31–273 (HDILRKFGVD…ISQEDPDEAR (243 aa)) folds into the ATP-grasp domain. ATP-binding positions include Lys-68, 75 to 77 (GRG), and Glu-136. Mg(2+) is bound by residues Asn-228 and Asp-242. Residues Asn-293 and 350–352 (GIV) each bind substrate.

Belongs to the succinate/malate CoA ligase beta subunit family. In terms of assembly, heterodimer of an alpha and a beta subunit. The cofactor is Mg(2+).

The protein localises to the mitochondrion. The enzyme catalyses succinate + ATP + CoA = succinyl-CoA + ADP + phosphate. Its pathway is carbohydrate metabolism; tricarboxylic acid cycle; succinate from succinyl-CoA (ligase route): step 1/1. In terms of biological role, succinyl-CoA synthetase functions in the citric acid cycle (TCA), coupling the hydrolysis of succinyl-CoA to the synthesis of ATP and thus represents the only step of substrate-level phosphorylation in the TCA. The beta subunit provides nucleotide specificity of the enzyme and binds the substrate succinate, while the binding sites for coenzyme A and phosphate are found in the alpha subunit. This Schizosaccharomyces pombe (strain 972 / ATCC 24843) (Fission yeast) protein is Succinate--CoA ligase [ADP-forming] subunit beta, mitochondrial.